Here is a 157-residue protein sequence, read N- to C-terminus: NADPH-dependent 7-cyano-7-deazaguanine reductase (157 aa).

Cys-55 functions as the Thioimide intermediate in the catalytic mechanism. Catalysis depends on Asp-62, which acts as the Proton donor. Residues 77–79 and 96–97 contribute to the substrate site; these read VES and HE.

Belongs to the GTP cyclohydrolase I family. QueF type 1 subfamily.

It is found in the cytoplasm. It catalyses the reaction 7-aminomethyl-7-carbaguanine + 2 NADP(+) = 7-cyano-7-deazaguanine + 2 NADPH + 3 H(+). The protein operates within tRNA modification; tRNA-queuosine biosynthesis. In terms of biological role, catalyzes the NADPH-dependent reduction of 7-cyano-7-deazaguanine (preQ0) to 7-aminomethyl-7-deazaguanine (preQ1). The polypeptide is NADPH-dependent 7-cyano-7-deazaguanine reductase (Neisseria meningitidis serogroup B (strain ATCC BAA-335 / MC58)).